The following is a 334-amino-acid chain: Protein-methionine-sulfoxide reductase catalytic subunit MsrP (334 aa).

The tat-type signal signal peptide spans 1-44 (MKKNQFLKESDVTAESVFFMKRRQVLKALGISAAALSLPHAAHA). Mo-molybdopterin-binding positions include Asn-88, 91-92 (YE), Cys-146, Thr-181, Asn-233, Arg-238, and 249-251 (GIK).

It belongs to the MsrP family. As to quaternary structure, heterodimer of a catalytic subunit (MsrP) and a heme-binding subunit (MsrQ). Mo-molybdopterin is required as a cofactor. Predicted to be exported by the Tat system. The position of the signal peptide cleavage has not been experimentally proven.

The protein resides in the periplasm. The enzyme catalyses L-methionyl-[protein] + a quinone + H2O = L-methionyl-(S)-S-oxide-[protein] + a quinol. It catalyses the reaction L-methionyl-[protein] + a quinone + H2O = L-methionyl-(R)-S-oxide-[protein] + a quinol. In terms of biological role, part of the MsrPQ system that repairs oxidized periplasmic proteins containing methionine sulfoxide residues (Met-O), using respiratory chain electrons. Thus protects these proteins from oxidative-stress damage caused by reactive species of oxygen and chlorine generated by the host defense mechanisms. MsrPQ is essential for the maintenance of envelope integrity under bleach stress, rescuing a wide series of structurally unrelated periplasmic proteins from methionine oxidation, including the primary periplasmic chaperone SurA and the lipoprotein Pal. The catalytic subunit MsrP is non-stereospecific, being able to reduce both (R-) and (S-) diastereoisomers of methionine sulfoxide. This Escherichia coli O81 (strain ED1a) protein is Protein-methionine-sulfoxide reductase catalytic subunit MsrP.